Here is a 256-residue protein sequence, read N- to C-terminus: Pimeloyl-[acyl-carrier protein] methyl ester esterase (256 aa).

Positions 15–242 (HLVLLHGWGL…AAHAPFISHP (228 aa)) constitute an AB hydrolase-1 domain. Substrate-binding positions include Trp-22, 82-83 (SL), and 143-147 (FLALQ). The active-site Nucleophile is Ser-82. Catalysis depends on residues Asp-207 and His-235. His-235 contacts substrate.

It belongs to the AB hydrolase superfamily. Carboxylesterase BioH family. As to quaternary structure, monomer.

It localises to the cytoplasm. The catalysed reaction is 6-carboxyhexanoyl-[ACP] methyl ester + H2O = 6-carboxyhexanoyl-[ACP] + methanol + H(+). It participates in cofactor biosynthesis; biotin biosynthesis. Its function is as follows. The physiological role of BioH is to remove the methyl group introduced by BioC when the pimeloyl moiety is complete. It allows to synthesize pimeloyl-ACP via the fatty acid synthetic pathway through the hydrolysis of the ester bonds of pimeloyl-ACP esters. This is Pimeloyl-[acyl-carrier protein] methyl ester esterase from Citrobacter koseri (strain ATCC BAA-895 / CDC 4225-83 / SGSC4696).